The chain runs to 303 residues: uncharacterized protein (303 aa).

Residues 173-300 enclose the Fe2OG dioxygenase domain; the sequence is KLPELLGQLN…RFTVNGWIRK (128 aa).

It depends on Fe(2+) as a cofactor. The cofactor is L-ascorbate.

This is an uncharacterized protein from Synechocystis sp. (strain ATCC 27184 / PCC 6803 / Kazusa).